The chain runs to 447 residues: Nacrein (447 aa).

A signal peptide spans 1–17; sequence MYLHLTALCVVIPLCYG. Residue Asn-44 is glycosylated (N-linked (GlcNAc...) asparagine). Residues 50 to 446 enclose the Alpha-carbonic anhydrase domain; sequence AGFSYDRSIC…KNKVTVYKSF (397 aa). The Zn(2+) site is built by His-149, His-151, and His-174. The segment at 218-329 is disordered; that stretch reads DEPDDEECKH…GENGHKHGCR (112 aa). Basic and acidic residues predominate over residues 224–236; it reads ECKHILKGHHPDN. Positions 237-321 are enriched in low complexity; the sequence is NENGNGDNGN…NNGENGNNGE (85 aa). Tandem repeats lie at residues 242–244, 245–247, 248–250, 251–253, 254–256, 257–259, 260–262, 263–265, 266–268, 269–271, 272–274, 275–277, 278–280, 281–283, 284–286, 287–289, 290–292, 293–295, 296–298, 299–301, 302–304, 305–307, 308–310, 311–313, 314–316, 317–318, and 320–322. The 27 X 3 AA approximate tandem repeats of G-X-N stretch occupies residues 242-322; that stretch reads GDNGNNGYNG…NGENGNNGEN (81 aa). Asn-261 carries an N-linked (GlcNAc...) asparagine glycan. 387 to 388 serves as a coordination point for substrate; it reads TT.

It belongs to the alpha-carbonic anhydrase family. Homooligomer; disulfide-linked. May also be disulfide-linked to insoluble organic matrix. Zn(2+) is required as a cofactor. N-glycosylated. In terms of tissue distribution, expressed at whole regions of the mantle epithelium tissue. Is found in the aragonitic nacreous and calcitic prismatic and foliated layers.

The protein resides in the secreted. It localises to the extracellular space. Its subcellular location is the extracellular matrix. It carries out the reaction hydrogencarbonate + H(+) = CO2 + H2O. Acts as a negative regulator for calcification in the shells of mollusks. May function both as a calcium concentrator and as a carbonic anhydrase required for production of carbonate ions, which are assembled to CaCO(3) at mineralization sites. Is important for shell formation in both the calcitic prismatic layer and the aragonitic nacreous layer. This Pinctada fucata (Akoya pearl oyster) protein is Nacrein.